A 423-amino-acid chain; its full sequence is Imidazolonepropionase (423 aa).

2 residues coordinate Fe(3+): His-78 and His-80. Residues His-78 and His-80 each coordinate Zn(2+). Residues Arg-87, Tyr-150, and His-183 each coordinate 4-imidazolone-5-propanoate. Residue Tyr-150 coordinates N-formimidoyl-L-glutamate. Residue His-247 coordinates Fe(3+). A Zn(2+)-binding site is contributed by His-247. Glu-250 is a 4-imidazolone-5-propanoate binding site. Asp-322 is a Fe(3+) binding site. Asp-322 lines the Zn(2+) pocket. N-formimidoyl-L-glutamate contacts are provided by Asn-324 and Gly-326. Position 327 (Ser-327) interacts with 4-imidazolone-5-propanoate.

Belongs to the metallo-dependent hydrolases superfamily. HutI family. It depends on Zn(2+) as a cofactor. The cofactor is Fe(3+).

The protein resides in the cytoplasm. It catalyses the reaction 4-imidazolone-5-propanoate + H2O = N-formimidoyl-L-glutamate. It participates in amino-acid degradation; L-histidine degradation into L-glutamate; N-formimidoyl-L-glutamate from L-histidine: step 3/3. Functionally, catalyzes the hydrolytic cleavage of the carbon-nitrogen bond in imidazolone-5-propanoate to yield N-formimidoyl-L-glutamate. It is the third step in the universal histidine degradation pathway. The polypeptide is Imidazolonepropionase (Bacillus mycoides (strain KBAB4) (Bacillus weihenstephanensis)).